A 317-amino-acid chain; its full sequence is tRNA pseudouridine synthase B (317 aa).

Aspartate 47 functions as the Nucleophile in the catalytic mechanism.

It belongs to the pseudouridine synthase TruB family. Type 1 subfamily.

It carries out the reaction uridine(55) in tRNA = pseudouridine(55) in tRNA. Responsible for synthesis of pseudouridine from uracil-55 in the psi GC loop of transfer RNAs. This Shewanella sp. (strain ANA-3) protein is tRNA pseudouridine synthase B.